We begin with the raw amino-acid sequence, 244 residues long: 7-cyano-7-deazaguanine synthase (244 aa).

14–24 (FSGGQDSATCV) serves as a coordination point for ATP. 4 residues coordinate Zn(2+): C202, C217, C220, and C223.

It belongs to the QueC family. Requires Zn(2+) as cofactor.

The catalysed reaction is 7-carboxy-7-deazaguanine + NH4(+) + ATP = 7-cyano-7-deazaguanine + ADP + phosphate + H2O + H(+). The protein operates within purine metabolism; 7-cyano-7-deazaguanine biosynthesis. Its function is as follows. Catalyzes the ATP-dependent conversion of 7-carboxy-7-deazaguanine (CDG) to 7-cyano-7-deazaguanine (preQ(0)). This chain is 7-cyano-7-deazaguanine synthase, found in Burkholderia cenocepacia (strain ATCC BAA-245 / DSM 16553 / LMG 16656 / NCTC 13227 / J2315 / CF5610) (Burkholderia cepacia (strain J2315)).